A 488-amino-acid chain; its full sequence is uncharacterized protein (488 aa).

It is found in the cytoplasm. Its subcellular location is the nucleus. This is an uncharacterized protein from Schizosaccharomyces pombe (strain 972 / ATCC 24843) (Fission yeast).